A 529-amino-acid chain; its full sequence is Serine hydroxymethyltransferase 3, chloroplastic (529 aa).

The transit peptide at 1-60 (MQACCGGNSMASLQQPGRVQGSVFPPIMPPVTKFSQQLKFNISKPFRSSFLKRNLVSEMR) directs the protein to the chloroplast. Residue K314 is modified to N6-(pyridoxal phosphate)lysine.

This sequence belongs to the SHMT family. Homotetramer. The cofactor is pyridoxal 5'-phosphate.

It localises to the plastid. It is found in the chloroplast. The catalysed reaction is (6R)-5,10-methylene-5,6,7,8-tetrahydrofolate + glycine + H2O = (6S)-5,6,7,8-tetrahydrofolate + L-serine. The protein operates within one-carbon metabolism; tetrahydrofolate interconversion. Its activity is regulated as follows. Inhibited by 5-CH3-H4PteGlu1/5 and 5-HCO-H4PteGlu1/5 in vitro. Catalyzes the interconversion of serine and glycine and directs the hydroxymethyl moiety of serine into the metabolic network of H4PteGlu(n)-bound one-carbon units. This Arabidopsis thaliana (Mouse-ear cress) protein is Serine hydroxymethyltransferase 3, chloroplastic.